Here is a 225-residue protein sequence, read N- to C-terminus: Ribonuclease 3 (225 aa).

Residues 5–127 enclose the RNase III domain; sequence IEKLTRQLGY…IIGAVYLDSD (123 aa). Mg(2+) is bound at residue Glu-40. Asp-44 is a catalytic residue. Asp-113 and Glu-116 together coordinate Mg(2+). The active site involves Glu-116. The DRBM domain occupies 154 to 224; it reads DPKTRLQEFL…AELALEQLTN (71 aa).

Belongs to the ribonuclease III family. As to quaternary structure, homodimer. Mg(2+) is required as a cofactor.

Its subcellular location is the cytoplasm. The catalysed reaction is Endonucleolytic cleavage to 5'-phosphomonoester.. Its function is as follows. Digests double-stranded RNA. Involved in the processing of primary rRNA transcript to yield the immediate precursors to the large and small rRNAs (23S and 16S). Processes some mRNAs, and tRNAs when they are encoded in the rRNA operon. Processes pre-crRNA and tracrRNA of type II CRISPR loci if present in the organism. The polypeptide is Ribonuclease 3 (Vibrio vulnificus (strain YJ016)).